Consider the following 175-residue polypeptide: Bacterial proteasome activator (175 aa).

The disordered stretch occupies residues 152–175 (LPPGIQVPGAQRGGATHPGTGQYL). The short motif at 173–175 (QYL) is the HbYX motif element.

The protein belongs to the Bpa family. In terms of assembly, forms a homooligomeric, either hexameric or heptameric, ring-like structure which stacks co-axially with the proteasomal alpha-rings.

Functionally, interacts with the core proteasome alpha-subunit (PrcA) through its C-terminal hydrophobic-tyrosine-X motif (HbYX motif). Interaction of Bpa with the proteasome stimulates proteasomal peptidase and casein degradation activity, which suggests Bpa could play a role in the removal of non-native or damaged proteins by influencing the conformation of the proteasome complex upon interaction. The polypeptide is Bacterial proteasome activator (Mycolicibacterium smegmatis (strain ATCC 700084 / mc(2)155) (Mycobacterium smegmatis)).